The following is a 306-amino-acid chain: D-alanine--D-alanine ligase (306 aa).

The region spanning 101–303 (KLLWQGAGLP…FSQLVVRILE (203 aa)) is the ATP-grasp domain. Residue 134–189 (ISALGLPLIVKPSREGSSVGMTKVVEENALQGALSLAFQHDDEILIEKWLCGPEFT) coordinates ATP. Aspartate 257, glutamate 270, and asparagine 272 together coordinate Mg(2+).

This sequence belongs to the D-alanine--D-alanine ligase family. Mg(2+) serves as cofactor. Mn(2+) is required as a cofactor.

The protein localises to the cytoplasm. The enzyme catalyses 2 D-alanine + ATP = D-alanyl-D-alanine + ADP + phosphate + H(+). Its pathway is cell wall biogenesis; peptidoglycan biosynthesis. In terms of biological role, cell wall formation. The sequence is that of D-alanine--D-alanine ligase from Salmonella paratyphi A (strain ATCC 9150 / SARB42).